Here is a 206-residue protein sequence, read N- to C-terminus: LexA repressor (206 aa).

Residues 28–48 constitute a DNA-binding region (H-T-H motif); it reads RAEIARRLGFKSANAAEEHLK. Residues Ser-123 and Lys-160 each act as for autocatalytic cleavage activity in the active site.

This sequence belongs to the peptidase S24 family. In terms of assembly, homodimer.

The enzyme catalyses Hydrolysis of Ala-|-Gly bond in repressor LexA.. In terms of biological role, represses a number of genes involved in the response to DNA damage (SOS response), including recA and lexA. In the presence of single-stranded DNA, RecA interacts with LexA causing an autocatalytic cleavage which disrupts the DNA-binding part of LexA, leading to derepression of the SOS regulon and eventually DNA repair. The protein is LexA repressor of Shewanella pealeana (strain ATCC 700345 / ANG-SQ1).